Reading from the N-terminus, the 29-residue chain is Snake venom metalloproteinase bothrolysin (29 aa).

A Peptidase M12B domain is found at 6 to 29 (RYIELFLVVDSGMFMKYNGNSDKI). A Ca(2+)-binding site is contributed by glutamate 9.

The protein belongs to the venom metalloproteinase (M12B) family. Requires Zn(2+) as cofactor. In terms of tissue distribution, expressed by the venom gland.

Its subcellular location is the secreted. It carries out the reaction Cleavage of 4-Gln-|-His-5, 9-Ser-|-His-10 and 14-Ala-|-Leu-15 of insulin B chain and Pro-|-Phe of angiotensin I.. Snake venom zinc metalloproteinase that impairs hemostasis in the envenomed animal. This is Snake venom metalloproteinase bothrolysin from Bothrops jararaca (Jararaca).